We begin with the raw amino-acid sequence, 677 residues long: Mitochondrial disaggregase (677 aa).

A mitochondrion-targeting transit peptide spans 1–57; it reads MMLSAVLRRTAPAPRLFLGLIKSPSLQSRGGAYNRSVITGDRGEPQRLRTAAWVRPG. Positions 64–103 are disordered; the sequence is PGRGAATGGRRGERTEIPYLTAASSGRGPSPEETLPGQDS. The tract at residues 92–126 is autoinhibitory; that stretch reads PSPEETLPGQDSWNGVPNKAGLGMWALAMALVVQC. ANK repeat units follow at residues 133–162, 166–195, 235–265, and 268–297; these read NKDAALMEAARANNVQEVRRLLSEGADVNA, LGWTALMVAAISHNESVVQVLLAAGADPNL, KGCTALHYAVLADDYSIVKELLGGGANPLQR, and MGHTPLDYAREGEVMKLLKTSETKYMEKQR. ATP contacts are provided by His316, Ile318, Ser353, Gly354, Ile355, Gly356, Lys357, Thr358, Glu425, and Asn466. Residues 477–505 are regulatory; slows ATPase and disaggregase activities; the sequence is LQLRQEALEMSRNRIAENLGDVQISDKIT. Arg531 lines the ATP pocket. At Lys559 the chain carries N6-acetyllysine. Position 590 (Arg590) interacts with ATP.

The protein belongs to the ClpA/ClpB family. As to quaternary structure, homododecamer when substrate-bound; the homododecamer consists of 2 homohexamers stacked head-to-head via ANK repeat-mediated interactions. The active substrate-bound form is likely to exist in a dynamic equilibrium between homohexamers and homododecamers. Homotetradecamer in the unbound state which is remodeled upon substrate binding into the homododecamer. Interacts with PHB and PHB2. Interacts with MAVS; the interaction is enhanced by Sendai virus infection. In terms of processing, proteolytically cleaved by protease PARL. ATP-dependent protein disaggregase activity is stimulated by PARL-mediated cleavage of the N-terminal autoinhibitory peptide.

It is found in the mitochondrion intermembrane space. It catalyses the reaction ATP + H2O = ADP + phosphate + H(+). With respect to regulation, disaggregase activity is inhibited by ADP. Functionally, functions as a regulatory ATPase and participates in secretion/protein trafficking process. Has ATP-dependent protein disaggregase activity and is required to maintain the solubility of key mitochondrial proteins. Involved in mitochondrial-mediated antiviral innate immunity, activates RIG-I-mediated signal transduction and production of IFNB1 and pro-inflammatory cytokine IL6. Plays a role in granulocyte differentiation. The sequence is that of Mitochondrial disaggregase from Rattus norvegicus (Rat).